A 426-amino-acid chain; its full sequence is MESLTLQPIQKVSGEVNLPGSKSVSNRALLLAALSTGTTRLTNLLDSDDIRHMLNALTQLGVDYQLSADKTVCEVTGVGGAFSSDKALELFLGNAGTAMRPLAAALCLGRGEYVLTGEPRMKERPIGHLVTALREAGADVEYLENENYPPLKITGTGLKSGTVSIDGSISSQFLTAFLMAAPLAEGEVTIKIEGELVSKPYIDITLHIMKQFGVDVINNDYQEFVIPTGQSYTAPGDFLVEGDASSASYFLAAAAIKGGEIKVTGIGKNSIQGDIQFADALEKMGAEIEWGDDYVISRCGELKGIDMDYNHIPDAAMTIATTALFAKGTTAIRNVYNWRVKETDRLAAMATELRKVGAEVEEGEDYIIVNPVAELTHAAIDTYDDHRMAMCFSLVALSDTPVTINDPGCTSKTFPDYFDKLKMLSL.

3-phosphoshikimate is bound by residues Lys-22, Ser-23, and Arg-27. Lys-22 provides a ligand contact to phosphoenolpyruvate. Residues Gly-96 and Arg-124 each contribute to the phosphoenolpyruvate site. 3-phosphoshikimate-binding residues include Ser-170, Ser-171, Gln-172, Ser-198, Asp-314, Asn-337, and Lys-341. A phosphoenolpyruvate-binding site is contributed by Gln-172. Asp-314 acts as the Proton acceptor in catalysis. Phosphoenolpyruvate-binding residues include Arg-345, Arg-387, and Lys-412.

Belongs to the EPSP synthase family. Monomer.

The protein localises to the cytoplasm. It carries out the reaction 3-phosphoshikimate + phosphoenolpyruvate = 5-O-(1-carboxyvinyl)-3-phosphoshikimate + phosphate. The protein operates within metabolic intermediate biosynthesis; chorismate biosynthesis; chorismate from D-erythrose 4-phosphate and phosphoenolpyruvate: step 6/7. Functionally, catalyzes the transfer of the enolpyruvyl moiety of phosphoenolpyruvate (PEP) to the 5-hydroxyl of shikimate-3-phosphate (S3P) to produce enolpyruvyl shikimate-3-phosphate and inorganic phosphate. The chain is 3-phosphoshikimate 1-carboxyvinyltransferase from Vibrio atlanticus (strain LGP32) (Vibrio splendidus (strain Mel32)).